We begin with the raw amino-acid sequence, 485 residues long: Delta(14)-sterol reductase (485 aa).

5 helical membrane passes run 18–38 (FFGP…VYVF), 77–97 (GLVS…SLIL), 131–151 (LAIL…WTFI), 155–175 (FIQI…FVYV), and 319–339 (SLGP…FYIF). Residues Lys346, Arg350, Leu373, Trp378, and 385–386 (NY) contribute to the NADP(+) site. A helical transmembrane segment spans residues 431-451 (AKGWGMLITYFYILYFAILLI). Residues Asp457, 461–465 (CHRKY), and Tyr472 each bind NADP(+).

This sequence belongs to the ERG4/ERG24 family.

The protein resides in the membrane. The enzyme catalyses 4,4-dimethyl-5alpha-cholesta-8,24-dien-3beta-ol + NADP(+) = 4,4-dimethyl-5alpha-cholesta-8,14,24-trien-3beta-ol + NADPH + H(+). It functions in the pathway steroid biosynthesis; zymosterol biosynthesis; zymosterol from lanosterol: step 2/6. Reduces the C14=C15 double bond of 4,4-dimethyl-cholesta-8,14,24-trienol to produce 4,4-dimethyl-cholesta-8,24-dienol. In Fusarium vanettenii (Neocosmospora pisi), this protein is Delta(14)-sterol reductase.